The following is a 256-amino-acid chain: 3-deoxy-manno-octulosonate cytidylyltransferase (256 aa).

Belongs to the KdsB family.

The protein localises to the cytoplasm. It carries out the reaction 3-deoxy-alpha-D-manno-oct-2-ulosonate + CTP = CMP-3-deoxy-beta-D-manno-octulosonate + diphosphate. The protein operates within nucleotide-sugar biosynthesis; CMP-3-deoxy-D-manno-octulosonate biosynthesis; CMP-3-deoxy-D-manno-octulosonate from 3-deoxy-D-manno-octulosonate and CTP: step 1/1. Its pathway is bacterial outer membrane biogenesis; lipopolysaccharide biosynthesis. Activates KDO (a required 8-carbon sugar) for incorporation into bacterial lipopolysaccharide in Gram-negative bacteria. This chain is 3-deoxy-manno-octulosonate cytidylyltransferase, found in Histophilus somni (strain 2336) (Haemophilus somnus).